A 269-amino-acid polypeptide reads, in one-letter code: Shikimate dehydrogenase (NADP(+)) (269 aa).

Shikimate contacts are provided by residues 17–19 and Thr64; that span reads SKS. The active-site Proton acceptor is the Lys68. Glu80 is an NADP(+) binding site. 2 residues coordinate shikimate: Asn89 and Asp105. NADP(+) is bound by residues 130-134, 154-159, and Met213; these read GAGGA and NRTHTK. A shikimate-binding site is contributed by Tyr215. Gly237 contributes to the NADP(+) binding site.

This sequence belongs to the shikimate dehydrogenase family. In terms of assembly, homodimer.

The enzyme catalyses shikimate + NADP(+) = 3-dehydroshikimate + NADPH + H(+). Its pathway is metabolic intermediate biosynthesis; chorismate biosynthesis; chorismate from D-erythrose 4-phosphate and phosphoenolpyruvate: step 4/7. Its function is as follows. Involved in the biosynthesis of the chorismate, which leads to the biosynthesis of aromatic amino acids. Catalyzes the reversible NADPH linked reduction of 3-dehydroshikimate (DHSA) to yield shikimate (SA). The protein is Shikimate dehydrogenase (NADP(+)) of Neisseria mucosa.